The following is a 66-amino-acid chain: Large ribosomal subunit protein bL35 (66 aa).

Residues 20 to 41 form a disordered region; sequence GKVMSAQRGKRHGMIKRTKKQI. A compositionally biased stretch (basic residues) spans 27–41; the sequence is RGKRHGMIKRTKKQI.

The protein belongs to the bacterial ribosomal protein bL35 family.

This chain is Large ribosomal subunit protein bL35, found in Rhodopseudomonas palustris (strain BisB5).